Reading from the N-terminus, the 239-residue chain is tRNA (guanine-N(1)-)-methyltransferase (239 aa).

Residues Gly-110 and 130 to 135 (VGDYVL) contribute to the S-adenosyl-L-methionine site.

The protein belongs to the RNA methyltransferase TrmD family. In terms of assembly, homodimer.

It is found in the cytoplasm. The enzyme catalyses guanosine(37) in tRNA + S-adenosyl-L-methionine = N(1)-methylguanosine(37) in tRNA + S-adenosyl-L-homocysteine + H(+). Its function is as follows. Specifically methylates guanosine-37 in various tRNAs. In Borrelia turicatae (strain 91E135), this protein is tRNA (guanine-N(1)-)-methyltransferase.